The sequence spans 361 residues: Nicotinate-nucleotide--dimethylbenzimidazole phosphoribosyltransferase (361 aa).

E315 (proton acceptor) is an active-site residue.

This sequence belongs to the CobT family.

It catalyses the reaction 5,6-dimethylbenzimidazole + nicotinate beta-D-ribonucleotide = alpha-ribazole 5'-phosphate + nicotinate + H(+). The protein operates within nucleoside biosynthesis; alpha-ribazole biosynthesis; alpha-ribazole from 5,6-dimethylbenzimidazole: step 1/2. Functionally, catalyzes the synthesis of alpha-ribazole-5'-phosphate from nicotinate mononucleotide (NAMN) and 5,6-dimethylbenzimidazole (DMB). This chain is Nicotinate-nucleotide--dimethylbenzimidazole phosphoribosyltransferase, found in Clostridium perfringens (strain ATCC 13124 / DSM 756 / JCM 1290 / NCIMB 6125 / NCTC 8237 / Type A).